A 61-amino-acid polypeptide reads, in one-letter code: Small ribosomal subunit protein uS14 (61 aa).

Zn(2+) is bound by residues cysteine 24, cysteine 27, cysteine 40, and cysteine 43.

Belongs to the universal ribosomal protein uS14 family. Zinc-binding uS14 subfamily. In terms of assembly, part of the 30S ribosomal subunit. Contacts proteins S3 and S10. Zn(2+) is required as a cofactor.

Binds 16S rRNA, required for the assembly of 30S particles and may also be responsible for determining the conformation of the 16S rRNA at the A site. This chain is Small ribosomal subunit protein uS14, found in Alkaliphilus metalliredigens (strain QYMF).